Reading from the N-terminus, the 82-residue chain is RNA-binding protein KhpA (82 aa).

Residues 35–82 (STILELRVSQSDVGKIIGRRGRIARAIRTLLGACAAKTNRRVQLEILD) enclose the KH domain.

Belongs to the KhpA RNA-binding protein family. Forms a complex with KhpB.

It is found in the cytoplasm. Functionally, a probable RNA chaperone. Forms a complex with KhpB which binds to cellular RNA and controls its expression. Plays a role in peptidoglycan (PG) homeostasis and cell length regulation. The chain is RNA-binding protein KhpA from Borreliella burgdorferi (strain ATCC 35210 / DSM 4680 / CIP 102532 / B31) (Borrelia burgdorferi).